Reading from the N-terminus, the 334-residue chain is Malate dehydrogenase, cytoplasmic (334 aa).

N-acetylserine is present on serine 2. Residues 11–17 (GAAGQIA) and aspartate 42 contribute to the NAD(+) site. The substrate site is built by arginine 92 and arginine 98. Position 105 (asparagine 105) interacts with NAD(+). Residue lysine 110 is modified to N6-succinyllysine. Residue glutamine 112 participates in NAD(+) binding. N6-acetyllysine is present on residues lysine 118 and lysine 121. 129-131 (VGN) serves as a coordination point for NAD(+). Substrate contacts are provided by asparagine 131 and arginine 162. Histidine 187 acts as the Proton acceptor in catalysis. The residue at position 214 (lysine 214) is an N6-succinyllysine. Serine 217 is modified (phosphoserine). Residue arginine 230 is modified to Omega-N-methylarginine. Phosphoserine is present on serine 241. Lysine 298 bears the N6-acetyllysine; alternate mark. Lysine 298 carries the post-translational modification N6-succinyllysine; alternate. At serine 309 the chain carries Phosphoserine. At lysine 318 the chain carries N6-succinyllysine. Position 333 is a phosphoserine (serine 333).

It belongs to the LDH/MDH superfamily. MDH type 2 family. Homodimer. ISGylated. Post-translationally, acetylation at Lys-118 dramatically enhances enzymatic activity and promotes adipogenic differentiation.

The protein resides in the cytoplasm. It localises to the cytosol. The enzyme catalyses (S)-malate + NAD(+) = oxaloacetate + NADH + H(+). It catalyses the reaction (2R)-2-hydroxy-3-(4-hydroxyphenyl)propanoate + NAD(+) = 3-(4-hydroxyphenyl)pyruvate + NADH + H(+). It carries out the reaction (S)-2-hydroxyglutarate + NAD(+) = 2-oxoglutarate + NADH + H(+). Its function is as follows. Catalyzes the reduction of aromatic alpha-keto acids in the presence of NADH. Plays essential roles in the malate-aspartate shuttle and the tricarboxylic acid cycle, important in mitochondrial NADH supply for oxidative phosphorylation. Catalyzes the reduction of 2-oxoglutarate to 2-hydroxyglutarate, leading to elevated reactive oxygen species (ROS). In Bos taurus (Bovine), this protein is Malate dehydrogenase, cytoplasmic (MDH1).